Reading from the N-terminus, the 366-residue chain is Zinc finger protein ubi-d4 B (366 aa).

Disordered stretches follow at residues 41 to 94 (ASAP…DGSS) and 140 to 167 (DDLD…IGGA). Residues 76 to 86 (PDPEQMLKKEG) are compositionally biased toward basic and acidic residues. Over residues 140–149 (DDLDDEDYEE) the composition is skewed to acidic residues. The C2H2-type zinc finger occupies 183-206 (YACDICGKRYKNRPGLSYHYAHSH). The segment at 211 to 243 (EGAGAEDKEDSQPPTPIMHRSEEQKSKKGPDGL) is disordered. A compositionally biased stretch (basic and acidic residues) spans 229 to 240 (HRSEEQKSKKGP). 2 consecutive PHD-type zinc fingers follow at residues 247-307 (NNYC…CKCC) and 304-354 (CKCC…CLDL).

It belongs to the requiem/DPF family.

Its subcellular location is the cytoplasm. The protein resides in the nucleus. Its function is as follows. May be a transcription factor required for the apoptosis response following survival factor withdrawal from myeloid cells. Might also have a role in the development and maturation of lymphoid cells. This chain is Zinc finger protein ubi-d4 B (req-b), found in Xenopus laevis (African clawed frog).